A 287-amino-acid polypeptide reads, in one-letter code: Probable aquaporin PIP1-5 (287 aa).

M1 carries the post-translational modification N-acetylmethionine. The tract at residues 1-34 (MEGKEEDVNVGANKFPERQPIGTAAQTESKDYKE) is disordered. Topologically, residues 1 to 55 (MEGKEEDVNVGANKFPERQPIGTAAQTESKDYKEPPPAPFFEPGELKSWSFYRAG) are cytoplasmic. A helical transmembrane segment spans residues 56–76 (IAEFIATFLFLYVTVLTVMGV). Residues 77 to 92 (KRAPNMCASVGIQGIA) are Extracellular-facing. A helical membrane pass occupies residues 93–113 (WAFGGMIFALVYCTAGISGGH). Residues 114-133 (INPAVTFGLFLARKLSLTRA) lie on the Cytoplasmic side of the membrane. An NPA 1 motif is present at residues 115–117 (NPA). The helical transmembrane segment at 134 to 154 (LFYIVMQCLGAICGAGVVKGF) threads the bilayer. Residues 155–175 (QPGLYQTNGGGANVVAHGYTK) lie on the Extracellular side of the membrane. The chain crosses the membrane as a helical span at residues 176 to 196 (GSGLGAEIVGTFVLVYTVFSA). Over 197-209 (TDAKRSARDSHVP) the chain is Cytoplasmic. A helical membrane pass occupies residues 210-230 (ILAPLPIGFAVFLVHLATIPI). Topologically, residues 231 to 257 (TGTGINPARSLGAAIIYNKDHAWDDHW) are extracellular. Positions 236 to 238 (NPA) match the NPA 2 motif. A helical transmembrane segment spans residues 258 to 278 (IFWVGPFIGAALAALYHQIVI). The Cytoplasmic segment spans residues 279 to 287 (RAIPFKSKT). S285 is modified (phosphoserine).

This sequence belongs to the MIP/aquaporin (TC 1.A.8) family. PIP (TC 1.A.8.11) subfamily. Predominantly expressed in green siliques. Also expressed above ground, in roots and flower buds.

The protein resides in the cell membrane. Aquaporins facilitate the transport of water and small neutral solutes across cell membranes. This Arabidopsis thaliana (Mouse-ear cress) protein is Probable aquaporin PIP1-5 (PIP1-5).